We begin with the raw amino-acid sequence, 360 residues long: tRNA (guanine(9)-N1)-methyltransferase (360 aa).

The tract at residues 1–77 is disordered; that stretch reads MENQDTEQSQ…RRKERIKEAE (77 aa). Composition is skewed to basic and acidic residues over residues 8-24 and 33-55; these read QSQK…DFKR and MTKR…DEYK. Over residues 56–67 the composition is skewed to basic residues; that stretch reads QKKREKKKAARE. A compositionally biased stretch (basic and acidic residues) spans 68–77; that stretch reads RRKERIKEAE. Residues 94–293 enclose the SAM-dependent MTase TRM10-type domain; it reads RAKVAPQEQI…EVLPPRKVKG (200 aa). Residues 199–200, G219, 223–227, C231, L245, and 257–259 each bind S-adenosyl-L-methionine; these read LT, DKNRY, and QVL. Residue D223 is the Proton acceptor of the active site. The interval 291-360 is disordered; the sequence is VKGKLTHGSD…SDEPSKGADH (70 aa). The segment covering 297–306 has biased composition (basic and acidic residues); that stretch reads HGSDPEKSIE. Over residues 307-324 the composition is skewed to low complexity; it reads PSEVSEQPVSSEQSEQPV. Polar residues predominate over residues 328–343; sequence QPVSSEQPVLSEQPVL.

Belongs to the class IV-like SAM-binding methyltransferase superfamily. TRM10 family. In terms of assembly, monomer.

It is found in the cytoplasm. The protein resides in the nucleus. The catalysed reaction is guanosine(9) in tRNA + S-adenosyl-L-methionine = N(1)-methylguanosine(9) in tRNA + S-adenosyl-L-homocysteine + H(+). S-adenosyl-L-methionine-dependent guanine N(1)-methyltransferase that catalyzes the formation of N(1)-methylguanine at position 9 (m1G9) in cytoplasmic tRNA. The chain is tRNA (guanine(9)-N1)-methyltransferase from Debaryomyces hansenii (strain ATCC 36239 / CBS 767 / BCRC 21394 / JCM 1990 / NBRC 0083 / IGC 2968) (Yeast).